An 890-amino-acid chain; its full sequence is Leucine-rich repeat receptor-like tyrosine-protein kinase PXC3 (890 aa).

The first 23 residues, M1 to A23, serve as a signal peptide directing secretion. Topologically, residues Q24–R534 are extracellular. N46, N61, N78, and N108 each carry an N-linked (GlcNAc...) asparagine glycan. LRR repeat units lie at residues M67–L85, R86–N108, S110–K132, L133–L157, R159–L181, S182–V205, S206–K229, K231–S254, L256–N276, S278–K300, C301–L325, I326–S349, G350–M373, R375–C397, K399–M421, R422–L446, D447–G469, and M471–P492. N140, N171, and N180 each carry an N-linked (GlcNAc...) asparagine glycan. N-linked (GlcNAc...) asparagine glycosylation is found at N276, N289, and N303. N363 is a glycosylation site (N-linked (GlcNAc...) asparagine). Residue N429 is glycosylated (N-linked (GlcNAc...) asparagine). N-linked (GlcNAc...) asparagine glycosylation is found at N477 and N498. The helical transmembrane segment at I535–L555 threads the bilayer. Over L556 to K890 the chain is Cytoplasmic. A Protein kinase domain is found at M608–V886. ATP-binding positions include L614 to V622 and K636. D735 (proton acceptor) is an active-site residue.

The protein belongs to the protein kinase superfamily. Tyr protein kinase family. Expressed in the vascular strands of cotyledons, the shoot apex, hypocotyls, roots, leaves, stems and flowers.

The protein localises to the cell membrane. It catalyses the reaction L-tyrosyl-[protein] + ATP = O-phospho-L-tyrosyl-[protein] + ADP + H(+). In terms of biological role, leucine-rich repeat receptor-like protein kinase that may play a role in vascular tissues development. This chain is Leucine-rich repeat receptor-like tyrosine-protein kinase PXC3, found in Arabidopsis thaliana (Mouse-ear cress).